Reading from the N-terminus, the 862-residue chain is S-layer protein EA1 (862 aa).

An N-terminal signal peptide occupies residues 1 to 29; that stretch reads MAKTNSYKKVIAGTMTAAMVAGIVSPVAA. 3 SLH domains span residues 30-93, 94-151, and 152-214; these read AGKS…NAQP, SFKD…KVNG, and ELVT…DNAQ.

The protein localises to the secreted. It localises to the cell wall. It is found in the S-layer. Functionally, the S-layer is a paracrystalline mono-layered assembly of proteins which coat the surface of bacteria. The polypeptide is S-layer protein EA1 (eag) (Bacillus anthracis).